A 456-amino-acid polypeptide reads, in one-letter code: MFS-type transporter ppzB (456 aa).

Transmembrane regions (helical) follow at residues 1–21, 38–58, 72–92, 125–145, and 154–174; these read MGLF…PFIM, GFLA…GWAA, VFLF…LLVV, IGTI…LGGV, and AVFA…GLVI. The interval 206–225 is disordered; the sequence is EAQERTHEGTPLLPQDDDDD. The next 6 helical transmembrane spans lie at 255–275, 284–304, 318–338, 348–368, 398–418, and 427–447; these read LAML…ATVP, FSSL…FALG, AAAT…GLPE, VALF…VTSP, FGFS…LGGV, and VMGA…FLFV.

Belongs to the major facilitator superfamily. TCR/Tet family.

It localises to the membrane. Its function is as follows. MFS-type transporter; part of the gene cluster that mediates the biosynthesis of pyrrolopyrazines, secondary metabolites showing insecticidal activity. Probably involved in the secretion of peramine and other pyrrolopyrazines. The protein is MFS-type transporter ppzB (ppzB) of Metarhizium majus (strain ARSEF 297).